Reading from the N-terminus, the 304-residue chain is Homoserine kinase (304 aa).

ATP is bound at residue 90-100 (PLARGLGSSAS).

The protein belongs to the GHMP kinase family. Homoserine kinase subfamily.

The protein localises to the cytoplasm. The catalysed reaction is L-homoserine + ATP = O-phospho-L-homoserine + ADP + H(+). It functions in the pathway amino-acid biosynthesis; L-threonine biosynthesis; L-threonine from L-aspartate: step 4/5. Functionally, catalyzes the ATP-dependent phosphorylation of L-homoserine to L-homoserine phosphate. The polypeptide is Homoserine kinase (Staphylococcus aureus (strain MRSA252)).